Reading from the N-terminus, the 609-residue chain is Probable ubiquitin-conjugating enzyme E2 25 (609 aa).

2 disordered regions span residues 70-99 (EEDEYAVGSPGDDYGYPESSPLSNSLLDPE) and 151-185 (ADKESASSSKSSHANNGNNSSKKATKASGIHSQFS). Low complexity predominate over residues 156–178 (ASSSKSSHANNGNNSSKKATKAS). Positions 332 to 492 (DWAKRIQDEW…TFILSLKTMV (161 aa)) constitute a UBC core domain. Cysteine 418 serves as the catalytic Glycyl thioester intermediate.

It belongs to the ubiquitin-conjugating enzyme family. As to expression, expressed in seeds, pistils, siliques, hypocotyls and leaves.

It carries out the reaction S-ubiquitinyl-[E1 ubiquitin-activating enzyme]-L-cysteine + [E2 ubiquitin-conjugating enzyme]-L-cysteine = [E1 ubiquitin-activating enzyme]-L-cysteine + S-ubiquitinyl-[E2 ubiquitin-conjugating enzyme]-L-cysteine.. Its pathway is protein modification; protein ubiquitination. Functionally, accepts the ubiquitin from the E1 complex and catalyzes its covalent attachment to other proteins. This is Probable ubiquitin-conjugating enzyme E2 25 (UBC25) from Arabidopsis thaliana (Mouse-ear cress).